The primary structure comprises 338 residues: Glycerol-3-phosphate dehydrogenase [NAD(P)+] (338 aa).

The NADPH site is built by serine 18, tyrosine 19, histidine 39, and lysine 113. Lysine 113, glycine 142, and threonine 144 together coordinate sn-glycerol 3-phosphate. An NADPH-binding site is contributed by alanine 146. Residues lysine 198, aspartate 251, serine 261, arginine 262, and asparagine 263 each coordinate sn-glycerol 3-phosphate. The Proton acceptor role is filled by lysine 198. NADPH is bound at residue arginine 262. Positions 286 and 288 each coordinate NADPH.

This sequence belongs to the NAD-dependent glycerol-3-phosphate dehydrogenase family.

The protein resides in the cytoplasm. The enzyme catalyses sn-glycerol 3-phosphate + NAD(+) = dihydroxyacetone phosphate + NADH + H(+). The catalysed reaction is sn-glycerol 3-phosphate + NADP(+) = dihydroxyacetone phosphate + NADPH + H(+). It participates in membrane lipid metabolism; glycerophospholipid metabolism. Catalyzes the reduction of the glycolytic intermediate dihydroxyacetone phosphate (DHAP) to sn-glycerol 3-phosphate (G3P), the key precursor for phospholipid synthesis. The sequence is that of Glycerol-3-phosphate dehydrogenase [NAD(P)+] from Photobacterium profundum (strain SS9).